Here is a 67-residue protein sequence, read N- to C-terminus: Large ribosomal subunit protein uL29 (67 aa).

It belongs to the universal ribosomal protein uL29 family.

This is Large ribosomal subunit protein uL29 from Clostridioides difficile (strain 630) (Peptoclostridium difficile).